The primary structure comprises 342 residues: Ribosomal RNA small subunit methyltransferase C (342 aa).

It belongs to the methyltransferase superfamily. RsmC family. As to quaternary structure, monomer.

Its subcellular location is the cytoplasm. The catalysed reaction is guanosine(1207) in 16S rRNA + S-adenosyl-L-methionine = N(2)-methylguanosine(1207) in 16S rRNA + S-adenosyl-L-homocysteine + H(+). Functionally, specifically methylates the guanine in position 1207 of 16S rRNA in the 30S particle. The polypeptide is Ribosomal RNA small subunit methyltransferase C (Shewanella sp. (strain MR-7)).